The primary structure comprises 680 residues: Lipase 1 (680 aa).

A signal peptide spans 1 to 34; it reads MKSQNKYSIRKFSVGASSILIATLLFLSGGQAQA. Positions 35–290 are excised as a propeptide; that stretch reads AEKQVNMGNS…AKAKDDQTNK (256 aa). The interval 82–259 is disordered; sequence KNLHNDKTIS…PTKDNDKKNG (178 aa). Over residues 84-112 the composition is skewed to basic and acidic residues; sequence LHNDKTISEENHRKTDDLNKDQLKDDKKS. Residues 125-138 show a composition bias toward polar residues; it reads KNNNANPSDVNQGL. Low complexity predominate over residues 148–170; the sequence is SKVASQQQSKEADNSQDSNANNN. Residues 204–223 show a composition bias toward polar residues; the sequence is QPQQNNQANDKITNYNFNNE. Over residues 224-234 the composition is skewed to basic and acidic residues; that stretch reads QEVKPQKDEKT. A compositionally biased stretch (polar residues) spans 235–246; it reads LSVSDLKNNQKS. Catalysis depends on serine 408, which acts as the Nucleophile. The active-site Charge relay system is aspartate 600. Aspartate 638 is a binding site for Ca(2+). The active-site Charge relay system is the histidine 639. Residues aspartate 641, aspartate 646, and aspartate 649 each contribute to the Ca(2+) site.

Belongs to the AB hydrolase superfamily. Lipase family.

It localises to the secreted. The enzyme catalyses a triacylglycerol + H2O = a diacylglycerol + a fatty acid + H(+). This is Lipase 1 (lip1) from Staphylococcus aureus (strain MSSA476).